The following is a 107-amino-acid chain: U20-lycotoxin-Ls1b (107 aa).

Positions 1–30 (MFSTSDQVSKMNSRILSALLILGIATCVIA) are cleaved as a signal peptide. Residues 31–76 (GGFCPKSRHPQCNLSYKINDCCAQSDCRVGSVCCVEGCGNVCRAES) enclose the WAP domain. Disulfide bonds link C34–C64, C42–C68, C51–C63, C52–C90, and C57–C72.

The protein belongs to the venom protein 11 family. 02 (wap-2) subfamily. In terms of processing, contains 5 disulfide bonds. Expressed by the venom gland.

The protein resides in the secreted. In terms of biological role, has antibacterial activity. The polypeptide is U20-lycotoxin-Ls1b (Lycosa singoriensis (Wolf spider)).